Reading from the N-terminus, the 247-residue chain is MPVFALIDEPVFPSPHLAEPGGLLAVGGDLSVARLLAAYRRGIFPWYDDESPILWWSPDPRPILVPGHVRVSKRLERTIRSGKFTVTLDTDFAGVIRGCAAVPRDADNGTWIVPDMIEGYERLHAAGHAHSVEAWQNGELVGGAYGVAIGKAFFGESMFHRATDASKVAFVTLCRFLDRHEFRFIDCQQATGHLLRFGAVQVRRNEFLRRLEAAREEEGMVGKWVLPRTTRCASPQPTSESSPSAKQ.

This sequence belongs to the L/F-transferase family.

The protein resides in the cytoplasm. The enzyme catalyses N-terminal L-lysyl-[protein] + L-leucyl-tRNA(Leu) = N-terminal L-leucyl-L-lysyl-[protein] + tRNA(Leu) + H(+). It carries out the reaction N-terminal L-arginyl-[protein] + L-leucyl-tRNA(Leu) = N-terminal L-leucyl-L-arginyl-[protein] + tRNA(Leu) + H(+). The catalysed reaction is L-phenylalanyl-tRNA(Phe) + an N-terminal L-alpha-aminoacyl-[protein] = an N-terminal L-phenylalanyl-L-alpha-aminoacyl-[protein] + tRNA(Phe). Its function is as follows. Functions in the N-end rule pathway of protein degradation where it conjugates Leu, Phe and, less efficiently, Met from aminoacyl-tRNAs to the N-termini of proteins containing an N-terminal arginine or lysine. This chain is Leucyl/phenylalanyl-tRNA--protein transferase, found in Solidesulfovibrio magneticus (strain ATCC 700980 / DSM 13731 / RS-1) (Desulfovibrio magneticus).